The following is a 103-amino-acid chain: Probable protease inhibitor Egf0.4b (103 aa).

The first 22 residues, 1-22 (MMSEKFALVLLVACIAFIGIET), serve as a signal peptide directing secretion. Positions 35 to 87 (CGENEAYDSMRRGCEERCDDHNPTFCFKFTTVCWCEKGYVRDKSDTCIKVEDC) constitute a TIL domain.

The protein belongs to the polydnaviridae EGF-like motif protein family.

This Microplitis demolitor bracovirus (isolate Webb) (MdBV) protein is Probable protease inhibitor Egf0.4b (O11).